The following is a 145-amino-acid chain: UPF0735 ACT domain-containing protein CPR_1404 (145 aa).

The region spanning 69 to 144 (IFNMVVTHEK…GVEKVEFVAM (76 aa)) is the ACT domain.

This sequence belongs to the UPF0735 family.

This Clostridium perfringens (strain SM101 / Type A) protein is UPF0735 ACT domain-containing protein CPR_1404.